The primary structure comprises 361 residues: Glyceraldehyde-3-phosphate dehydrogenase, glycosomal (361 aa).

NAD(+)-binding positions include arginine 13–isoleucine 14, aspartate 39, glutamine 92, and serine 135. D-glyceraldehyde 3-phosphate contacts are provided by residues serine 166–threonine 168, threonine 198, threonine 227–glycine 228, and arginine 250. Catalysis depends on cysteine 167, which acts as the Nucleophile. Asparagine 336 serves as a coordination point for NAD(+). Positions serine 359–methionine 361 match the Microbody targeting signal motif.

This sequence belongs to the glyceraldehyde-3-phosphate dehydrogenase family. Homotetramer.

The protein localises to the glycosome. The enzyme catalyses D-glyceraldehyde 3-phosphate + phosphate + NAD(+) = (2R)-3-phospho-glyceroyl phosphate + NADH + H(+). It functions in the pathway carbohydrate degradation; glycolysis; pyruvate from D-glyceraldehyde 3-phosphate: step 1/5. This is Glyceraldehyde-3-phosphate dehydrogenase, glycosomal (GAPG) from Leishmania mexicana.